The chain runs to 766 residues: BMP/retinoic acid-inducible neural-specific protein 3 (766 aa).

Positions 1–33 (MIWRRRAGAELSSLMALWEWIVLSLHCWVLAVA) are cleaved as a signal peptide. The MACPF domain maps to 74-264 (RYKIYREFGR…FVQAALSYIA (191 aa)). 6 N-linked (GlcNAc...) asparagine glycosylation sites follow: N168, N337, N456, N562, N609, and N641.

This sequence belongs to the BRINP family. In terms of tissue distribution, expressed in olfactory bulb, cerebellum and neuronal layers in hippocampus.

It localises to the secreted. The protein resides in the mitochondrion. In terms of biological role, inhibits neuronal cell proliferation by negative regulation of the cell cycle transition. Promotes pituitary gonadotrope cell proliferation, migration and invasion, when overexpressed. May play a role in cell pituitary tumor development. This is BMP/retinoic acid-inducible neural-specific protein 3 (Brinp3) from Rattus norvegicus (Rat).